A 318-amino-acid polypeptide reads, in one-letter code: uncharacterized protein (318 aa).

The chain crosses the membrane as a helical span at residues 2–22 (ILELIIVLVLLVLAFKSLKIL). The tract at residues 295 to 318 (SDPEDKGVSEVETESQPAEKPEKH) is disordered.

Belongs to the band 7/mec-2 family.

It is found in the membrane. This is an uncharacterized protein from Methanothermobacter thermautotrophicus (strain ATCC 29096 / DSM 1053 / JCM 10044 / NBRC 100330 / Delta H) (Methanobacterium thermoautotrophicum).